A 469-amino-acid polypeptide reads, in one-letter code: Neuraminidase (469 aa).

The Intravirion portion of the chain corresponds to Met1–Thr9. A helical membrane pass occupies residues Ile10–Val30. The interval Gly11 to Val33 is involved in apical transport and lipid raft association. At Thr31–Ile469 the chain is on the virion surface side. The interval His36–Ser88 is hypervariable stalk region. N-linked (GlcNAc...) asparagine; by host glycans are attached at residues Asn61, Asn70, and Asn86. Positions Gln91 to Ile469 are head of neuraminidase. 8 disulfide bridges follow: Cys92–Cys417, Cys124–Cys129, Cys183–Cys230, Cys232–Cys237, Cys278–Cys291, Cys280–Cys289, Cys318–Cys337, and Cys421–Cys447. Residue Arg118 participates in substrate binding. A glycan (N-linked (GlcNAc...) asparagine; by host) is linked at Asn146. The Proton donor/acceptor role is filled by Asp151. Arg152 lines the substrate pocket. 2 N-linked (GlcNAc...) asparagine; by host glycosylation sites follow: Asn200 and Asn234. Residue Glu276–Glu277 coordinates substrate. Arg292 lines the substrate pocket. Ca(2+) is bound by residues Asp293, Gly297, and Asp324. A glycan (N-linked (GlcNAc...) asparagine; by host) is linked at Asn329. Arg371 is a binding site for substrate. Asn402 carries N-linked (GlcNAc...) asparagine; by host glycosylation. Tyr406 serves as the catalytic Nucleophile.

Belongs to the glycosyl hydrolase 34 family. Homotetramer. Ca(2+) serves as cofactor. In terms of processing, N-glycosylated.

It is found in the virion membrane. It localises to the host apical cell membrane. It carries out the reaction Hydrolysis of alpha-(2-&gt;3)-, alpha-(2-&gt;6)-, alpha-(2-&gt;8)- glycosidic linkages of terminal sialic acid residues in oligosaccharides, glycoproteins, glycolipids, colominic acid and synthetic substrates.. Its activity is regulated as follows. Inhibited by the neuraminidase inhibitors zanamivir (Relenza) and oseltamivir (Tamiflu). These drugs interfere with the release of progeny virus from infected cells and are effective against all influenza strains. Resistance to neuraminidase inhibitors is quite rare. Catalyzes the removal of terminal sialic acid residues from viral and cellular glycoconjugates. Cleaves off the terminal sialic acids on the glycosylated HA during virus budding to facilitate virus release. Additionally helps virus spread through the circulation by further removing sialic acids from the cell surface. These cleavages prevent self-aggregation and ensure the efficient spread of the progeny virus from cell to cell. Otherwise, infection would be limited to one round of replication. Described as a receptor-destroying enzyme because it cleaves a terminal sialic acid from the cellular receptors. May facilitate viral invasion of the upper airways by cleaving the sialic acid moieties on the mucin of the airway epithelial cells. Likely to plays a role in the budding process through its association with lipid rafts during intracellular transport. May additionally display a raft-association independent effect on budding. Plays a role in the determination of host range restriction on replication and virulence. Sialidase activity in late endosome/lysosome traffic seems to enhance virus replication. The protein is Neuraminidase of Influenza A virus (strain A/Niigata/137/1996 H3N2).